Consider the following 316-residue polypeptide: Ribosomal RNA small subunit methyltransferase H (316 aa).

S-adenosyl-L-methionine-binding positions include 35–37, aspartate 55, phenylalanine 84, aspartate 105, and glutamine 112; that span reads AGH.

This sequence belongs to the methyltransferase superfamily. RsmH family.

It localises to the cytoplasm. The catalysed reaction is cytidine(1402) in 16S rRNA + S-adenosyl-L-methionine = N(4)-methylcytidine(1402) in 16S rRNA + S-adenosyl-L-homocysteine + H(+). Specifically methylates the N4 position of cytidine in position 1402 (C1402) of 16S rRNA. In Streptococcus pneumoniae (strain Taiwan19F-14), this protein is Ribosomal RNA small subunit methyltransferase H.